We begin with the raw amino-acid sequence, 217 residues long: ATP phosphoribosyltransferase (217 aa).

It belongs to the ATP phosphoribosyltransferase family. Short subfamily. In terms of assembly, heteromultimer composed of HisG and HisZ subunits.

Its subcellular location is the cytoplasm. The catalysed reaction is 1-(5-phospho-beta-D-ribosyl)-ATP + diphosphate = 5-phospho-alpha-D-ribose 1-diphosphate + ATP. The protein operates within amino-acid biosynthesis; L-histidine biosynthesis; L-histidine from 5-phospho-alpha-D-ribose 1-diphosphate: step 1/9. Its function is as follows. Catalyzes the condensation of ATP and 5-phosphoribose 1-diphosphate to form N'-(5'-phosphoribosyl)-ATP (PR-ATP). Has a crucial role in the pathway because the rate of histidine biosynthesis seems to be controlled primarily by regulation of HisG enzymatic activity. The chain is ATP phosphoribosyltransferase from Burkholderia vietnamiensis (strain G4 / LMG 22486) (Burkholderia cepacia (strain R1808)).